The primary structure comprises 200 residues: ATP-dependent Clp protease proteolytic subunit 3 (200 aa).

Residue serine 101 is the Nucleophile of the active site. The active site involves histidine 126.

It belongs to the peptidase S14 family. In terms of assembly, fourteen ClpP subunits assemble into 2 heptameric rings which stack back to back to give a disk-like structure with a central cavity, resembling the structure of eukaryotic proteasomes.

It is found in the cytoplasm. The enzyme catalyses Hydrolysis of proteins to small peptides in the presence of ATP and magnesium. alpha-casein is the usual test substrate. In the absence of ATP, only oligopeptides shorter than five residues are hydrolyzed (such as succinyl-Leu-Tyr-|-NHMec, and Leu-Tyr-Leu-|-Tyr-Trp, in which cleavage of the -Tyr-|-Leu- and -Tyr-|-Trp bonds also occurs).. In terms of biological role, cleaves peptides in various proteins in a process that requires ATP hydrolysis. Has a chymotrypsin-like activity. Plays a major role in the degradation of misfolded proteins. The sequence is that of ATP-dependent Clp protease proteolytic subunit 3 from Parasynechococcus marenigrum (strain WH8102).